We begin with the raw amino-acid sequence, 337 residues long: Cobalt-precorrin-5B C(1)-methyltransferase (337 aa).

The protein belongs to the CbiD family.

It catalyses the reaction Co-precorrin-5B + S-adenosyl-L-methionine = Co-precorrin-6A + S-adenosyl-L-homocysteine. It functions in the pathway cofactor biosynthesis; adenosylcobalamin biosynthesis; cob(II)yrinate a,c-diamide from sirohydrochlorin (anaerobic route): step 6/10. Functionally, catalyzes the methylation of C-1 in cobalt-precorrin-5B to form cobalt-precorrin-6A. The sequence is that of Cobalt-precorrin-5B C(1)-methyltransferase from Methanoculleus marisnigri (strain ATCC 35101 / DSM 1498 / JR1).